The chain runs to 388 residues: Succinate--CoA ligase [ADP-forming] subunit beta (388 aa).

The ATP-grasp domain maps to 9-244 (KQLFAEYGLP…PSQEDSREAE (236 aa)). ATP-binding positions include Lys46, 53-55 (GRG), Glu99, Thr102, and Glu107. Mg(2+)-binding residues include Asn199 and Asp213. Substrate contacts are provided by residues Asn264 and 321 to 323 (GIV).

The protein belongs to the succinate/malate CoA ligase beta subunit family. Heterotetramer of two alpha and two beta subunits. It depends on Mg(2+) as a cofactor.

The enzyme catalyses succinate + ATP + CoA = succinyl-CoA + ADP + phosphate. It catalyses the reaction GTP + succinate + CoA = succinyl-CoA + GDP + phosphate. The protein operates within carbohydrate metabolism; tricarboxylic acid cycle; succinate from succinyl-CoA (ligase route): step 1/1. Its function is as follows. Succinyl-CoA synthetase functions in the citric acid cycle (TCA), coupling the hydrolysis of succinyl-CoA to the synthesis of either ATP or GTP and thus represents the only step of substrate-level phosphorylation in the TCA. The beta subunit provides nucleotide specificity of the enzyme and binds the substrate succinate, while the binding sites for coenzyme A and phosphate are found in the alpha subunit. The chain is Succinate--CoA ligase [ADP-forming] subunit beta from Marinobacter nauticus (strain ATCC 700491 / DSM 11845 / VT8) (Marinobacter aquaeolei).